Reading from the N-terminus, the 468-residue chain is Na(+)/H(+) antiporter NhaA (468 aa).

A run of 10 helical transmembrane segments spans residues Phe32 to Leu52, Leu83 to Ile103, Ala119 to Ile139, Gly148 to Gly168, Phe178 to Phe198, Gly205 to Val225, Ala320 to Val340, Gly354 to Val374, Leu397 to Phe417, and Leu428 to Tyr448.

The protein belongs to the NhaA Na(+)/H(+) (TC 2.A.33) antiporter family.

Its subcellular location is the cell inner membrane. The enzyme catalyses Na(+)(in) + 2 H(+)(out) = Na(+)(out) + 2 H(+)(in). Functionally, na(+)/H(+) antiporter that extrudes sodium in exchange for external protons. This Cupriavidus necator (strain ATCC 17699 / DSM 428 / KCTC 22496 / NCIMB 10442 / H16 / Stanier 337) (Ralstonia eutropha) protein is Na(+)/H(+) antiporter NhaA.